A 389-amino-acid chain; its full sequence is Monomeric sarcosine oxidase (389 aa).

8-38 provides a ligand contact to FAD; the sequence is DVIVVGAGSMGMAAGYYLSKQGVKTLLVDSF. S-8alpha-FAD cysteine is present on C318.

Belongs to the MSOX/MTOX family. MSOX subfamily. In terms of assembly, monomer. FAD is required as a cofactor.

The protein localises to the cytoplasm. The catalysed reaction is sarcosine + O2 + H2O = formaldehyde + glycine + H2O2. Functionally, catalyzes the oxidative demethylation of sarcosine. The sequence is that of Monomeric sarcosine oxidase (soxA) from Arthrobacter sp. (strain TE1826).